The chain runs to 1036 residues: Histidine kinase 3 (1036 aa).

The Extracellular segment spans residues 1-8; sequence MSLFHVLG. A helical transmembrane segment spans residues 9-29; it reads FGVKIGHLFWMLCCWFVSWFV. Residues 30 to 94 are Cytoplasmic-facing; it reads DNGIEDKSGL…VKFNKAWWRK (65 aa). Residues 95–115 traverse the membrane as a helical segment; the sequence is LVVVWVVFWVLVSIWTFWYFS. Residues 116 to 399 are Extracellular-facing; the sequence is SQAMEKRKET…CRFKQKPPWP (284 aa). The 227-residue stretch at 163–389 folds into the CHASE domain; sequence IPSAIDQRTF…GDPLRKHEMR (227 aa). A helical membrane pass occupies residues 400-420; it reads VLSMVTSFGILVIALLVAHII. The Cytoplasmic segment spans residues 421 to 1036; sequence HATVSRIHKV…FFNSPSDTES (616 aa). Positions 457–723 constitute a Histidine kinase domain; sequence TVSHEIRTPM…TFTFTAVFSN (267 aa). At His-460 the chain carries Phosphohistidine; by autocatalysis. 2 consecutive Response regulatory domains span residues 746–865 and 891–1028; these read KAVV…QRGL and KILI…SRFF. Asp-941 is subject to 4-aspartylphosphate.

In terms of assembly, interacts with AHK2, AHK4, AHP1, AHP2, AHP3, AHP5 and At5g43560. In terms of processing, autophosphorylated predominantly on His residues. Activation probably requires a transfer of a phosphate group between a His in the transmitter domain and an Asp of the receiver domain. In terms of tissue distribution, mostly expressed in leaves and flowers, and, to a lower extent, in roots, stems, and siliques, especially in the vascular tissues. Present in seedlings.

The protein resides in the cell membrane. The protein localises to the endoplasmic reticulum membrane. The enzyme catalyses ATP + protein L-histidine = ADP + protein N-phospho-L-histidine.. Activated by cytokinins to initiate phosphorelay signaling. This cytokinin-mediated activation is repressed by the trans-zeatin antagonists 6-(2-hydroxy-3-methylbenzylamino)purine (PI-55) and 6-(2,5-Dihydroxybenzylamino)purine (LGR-991). In terms of biological role, cytokinins (CK) receptor related to bacterial two-component regulators. Functions as a histidine kinase and transmits the stress signal to a downstream MAPK cascade. This protein undergoes an ATP-dependent autophosphorylation at a conserved histidine residue in the kinase core, and a phosphoryl group is then transferred to a conserved aspartate residue in the receiver domain. In the presence of cytokinin, feeds phosphate to phosphorelay-integrating histidine phosphotransfer protein (HPt) and activates subsequent cascade. Involved in meristems establishment in seedlings. Redundant negative regulator of drought and salt stress responses and abscisic acid (ABA) signaling. Together with AHK2, plays a negative regulatory role in cold stress signaling via inhibition of ABA response, occurring independently of the cold acclimation pathway. Redundant positive regulator of cytokinin signaling that regulates many developmental processes including seed germination, cell division, seed size, chlorophyll retention during leaf senescence, root repression and shoot promotion. Can interact with isoprenoid-type cytokinins trans-zeatin (tZ and tZR), cis-zeatin (cZ), dihydrozeatin (DZ), buta-2,3-dienyladenine (HA-8), penta-2,3-dienyladenine (HA-1), 4-methyl-penta-2,3-dienyladenine (HA-10), 4-hydroxy-2-butynyladenine (RM1), 2-propynyladenine (RM3), 2-butynyladenine (RM6), and cytokinin ribosides and ribotides. Together with AHK4, involved in the cytokinin-dependent responses to Pi starvation and sucrose stresses. Promotes cytokinin-mediated leaf longevity through a specific phosphorylation of the response regulator ARR2. Involved in alkamides (e.g. N-isobutyl decanamide) and N-acylethanolamides (NAE) signaling that control meristematic activity and differentiation processes during plant development. Contributes to vascular bundle formation and secondary growth in a cytokinin-dependent manner, probably by promoting the maintenance of mitotic activity and/or identity of procambial cells. Plays a role in the cytokinin-mediated repression of the iron uptake pathway. Required by the cytokinin-dependent flower development regulation pathway. This Arabidopsis thaliana (Mouse-ear cress) protein is Histidine kinase 3 (AHK3).